Here is a 213-residue protein sequence, read N- to C-terminus: Ras-related protein Rab-25 (213 aa).

9 residues coordinate GTP: S21, G24, K25, T26, N27, S38, H39, T43, and T44. Residue T26 participates in Mg(2+) binding. Short sequence motifs (switch) lie at residues 35–49 and 67–84; these read NEFS…GVEF and DTAG…YYRG. Positions 44 and 67 each coordinate Mg(2+). Residues G70, N125, K126, D128, A156, and L157 each contribute to the GTP site. 2 S-geranylgeranyl cysteine lipidation sites follow: C209 and C210. Cysteine methyl ester is present on C210. A propeptide spans 211 to 213 (removed in mature form); sequence ISL.

Belongs to the small GTPase superfamily. Rab family. As to quaternary structure, interacts (GTP-bound form) with RAB11FIP1, RAB11FIP2, RAB11FIP3 and RAB11FIP4. Interacts (via the hypervariable C-terminal region) with ITGB1 (via the cytoplasmic region); the interaction is GTP-dependent. Interacts with ITGAV. Associates with the integrin alpha-V/beta-1 heterodimer. Interacts with VPS33B. Mg(2+) serves as cofactor. As to expression, expression is restricted to epithelial cells. Expressed in ovarian epithelium (NOE) and breast tissue. Expressed in ovarian cancer; expression is increased relative to NOE cells. Expression in ovarian cancer is stage dependent, with stage III and stage IV showing higher levels than early stage cancers. Expressed in breast cancer; expression is increased relative to normal breast tissue.

It is found in the cell membrane. The protein resides in the cytoplasmic vesicle. The protein localises to the cell projection. It localises to the pseudopodium membrane. It catalyses the reaction GTP + H2O = GDP + phosphate + H(+). Regulated by guanine nucleotide exchange factors (GEFs) which promote the exchange of bound GDP for free GTP. Regulated by GTPase activating proteins (GAPs) which increase the GTP hydrolysis activity. Inhibited by GDP dissociation inhibitors (GDIs) which prevent Rab-GDP dissociation. In terms of biological role, the small GTPases Rab are key regulators of intracellular membrane trafficking, from the formation of transport vesicles to their fusion with membranes. Rabs cycle between an inactive GDP-bound form and an active GTP-bound form that is able to recruit to membranes different set of downstream effectors directly responsible for vesicle formation, movement, tethering and fusion. RAB25 regulates epithelial cell differentiation, proliferation and survival, thereby playing key roles in tumorigenesis. Promotes invasive migration of cells in which it functions to localize and maintain integrin alpha-V/beta-1 at the tips of extending pseudopodia. Involved in the regulation of epithelial morphogenesis through the control of CLDN4 expression and localization at tight junctions. May selectively regulate the apical recycling pathway. Together with MYO5B regulates transcytosis. The sequence is that of Ras-related protein Rab-25 from Homo sapiens (Human).